A 201-amino-acid chain; its full sequence is Ribonuclease HII (201 aa).

The RNase H type-2 domain occupies 10–200 (LIEAGCDEAG…LGDGQLELFS (191 aa)). A divalent metal cation contacts are provided by aspartate 16, glutamate 17, and aspartate 108.

This sequence belongs to the RNase HII family. It depends on Mn(2+) as a cofactor. Requires Mg(2+) as cofactor.

It localises to the cytoplasm. The enzyme catalyses Endonucleolytic cleavage to 5'-phosphomonoester.. Functionally, endonuclease that specifically degrades the RNA of RNA-DNA hybrids. This is Ribonuclease HII from Bacteroides fragilis (strain ATCC 25285 / DSM 2151 / CCUG 4856 / JCM 11019 / LMG 10263 / NCTC 9343 / Onslow / VPI 2553 / EN-2).